The chain runs to 210 residues: Cdc42 effector protein 2 (210 aa).

Serine 2 carries the N-acetylserine modification. A CRIB domain is found at 30 to 44; it reads ISPPLGDFRHTIHIG. 3 positions are modified to phosphoserine: serine 31, serine 101, and serine 141. The segment at 124-145 is disordered; that stretch reads AQAPPKPPRLHLETPQASPQEA.

Belongs to the BORG/CEP family. In terms of assembly, interacts with CDC42 and RHOQ, in a GTP-dependent manner, and with SEPT7.

It localises to the endomembrane system. It is found in the cytoplasm. The protein resides in the cytoskeleton. Probably involved in the organization of the actin cytoskeleton. May act downstream of CDC42 to induce actin filament assembly leading to cell shape changes. Induces pseudopodia formation in fibroblasts in a CDC42-dependent manner. In Bos taurus (Bovine), this protein is Cdc42 effector protein 2 (CDC42EP2).